We begin with the raw amino-acid sequence, 376 residues long: Protein insensitive (376 aa).

Residues 50–79 (QVEVENRALRDKVRYLEAKLQQHKDLLSQI) adopt a coiled-coil conformation. One can recognise a BEN domain in the interval 258 to 356 (GPNNTCVPAS…TKCADENKMM (99 aa)).

In terms of assembly, homodimer. Interacts (via BEN domain) with Su(H). Interacts with Cp190.

It is found in the nucleus. In terms of biological role, can act as both a transcriptional repressor and corepressor. Represses the expression of genes involved in neural development and preferentially binds palindromic sequence 5'-CCAATTGG-3' to mediate transcriptional repression. Acts as a corepressor for suppressor of hairless (Su(H)) and inhibits Notch signaling during peripheral nervous system development. This is Protein insensitive (insv) from Drosophila melanogaster (Fruit fly).